The primary structure comprises 109 residues: Putative double-stranded DNA mimic protein Ent638_2296 (109 aa).

The protein belongs to the putative dsDNA mimic protein family.

Functionally, may act as a double-stranded DNA (dsDNA) mimic. Probably regulates the activity of a dsDNA-binding protein. The protein is Putative double-stranded DNA mimic protein Ent638_2296 of Enterobacter sp. (strain 638).